A 172-amino-acid chain; its full sequence is 3-hydroxydecanoyl-[acyl-carrier-protein] dehydratase (172 aa).

Residue H71 is part of the active site.

The protein belongs to the thioester dehydratase family. FabA subfamily. In terms of assembly, homodimer.

Its subcellular location is the cytoplasm. It carries out the reaction a (3R)-hydroxyacyl-[ACP] = a (2E)-enoyl-[ACP] + H2O. The enzyme catalyses (3R)-hydroxydecanoyl-[ACP] = (2E)-decenoyl-[ACP] + H2O. The catalysed reaction is (2E)-decenoyl-[ACP] = (3Z)-decenoyl-[ACP]. It functions in the pathway lipid metabolism; fatty acid biosynthesis. Its function is as follows. Necessary for the introduction of cis unsaturation into fatty acids. Catalyzes the dehydration of (3R)-3-hydroxydecanoyl-ACP to E-(2)-decenoyl-ACP and then its isomerization to Z-(3)-decenoyl-ACP. Can catalyze the dehydratase reaction for beta-hydroxyacyl-ACPs with saturated chain lengths up to 16:0, being most active on intermediate chain length. The sequence is that of 3-hydroxydecanoyl-[acyl-carrier-protein] dehydratase from Aliivibrio salmonicida (strain LFI1238) (Vibrio salmonicida (strain LFI1238)).